The primary structure comprises 64 residues: Large ribosomal subunit protein bL32 (64 aa).

This sequence belongs to the bacterial ribosomal protein bL32 family.

The chain is Large ribosomal subunit protein bL32 from Bifidobacterium longum (strain DJO10A).